The primary structure comprises 336 residues: 4-hydroxy-2-oxovalerate aldolase (336 aa).

The 251-residue stretch at 5-255 folds into the Pyruvate carboxyltransferase domain; the sequence is IRIIDSTLRD…ETGVDLYKIM (251 aa). 13-14 serves as a coordination point for substrate; that stretch reads RD. Residue Asp14 coordinates Mn(2+). The Proton acceptor role is filled by His17. Positions 167 and 194 each coordinate substrate. Mn(2+)-binding residues include His194 and His196. Position 285 (Tyr285) interacts with substrate.

Belongs to the 4-hydroxy-2-oxovalerate aldolase family.

It catalyses the reaction (S)-4-hydroxy-2-oxopentanoate = acetaldehyde + pyruvate. The sequence is that of 4-hydroxy-2-oxovalerate aldolase (mhpE) from Carboxydothermus hydrogenoformans (strain ATCC BAA-161 / DSM 6008 / Z-2901).